The primary structure comprises 344 residues: Transcription factor HHO3 (344 aa).

Disordered stretches follow at residues 90 to 122 (KWSS…DKKK) and 156 to 212 (AFQP…KQRR). Positions 97-106 (DETDKDEEAE) are enriched in acidic residues. The segment covering 178 to 188 (TPTSTTTTSST) has biased composition (low complexity). The region spanning 206–266 (SNRKQRRCWS…HLQKYRLHTR (61 aa)) is the HTH myb-type domain. A DNA-binding region (H-T-H motif) is located at residues 237–262 (PKQIRDLMKVDGLTNDEVKSHLQKYR). Positions 306–344 (PVATQPPQSSTSGERSNRGCKSPATSSTTTHTPHLLPLS) are disordered. Polar residues predominate over residues 310–319 (QPPQSSTSGE). Low complexity predominate over residues 330–344 (TSSTTTHTPHLLPLS).

It is found in the nucleus. In terms of biological role, probable transcription factor involved in phosphate signaling in roots. This Arabidopsis thaliana (Mouse-ear cress) protein is Transcription factor HHO3.